We begin with the raw amino-acid sequence, 396 residues long: Purine ribonucleoside efflux pump NepI (396 aa).

The Cytoplasmic portion of the chain corresponds to 1–21 (MSEFIAENRGADAITRPNWSA). The helical transmembrane segment at 22 to 42 (VFSVAFCVACLIIVEFLPVSL) threads the bilayer. Over 43 to 54 (LTPMAQDLGISE) the chain is Periplasmic. The chain crosses the membrane as a helical span at residues 55-75 (GVAGQSVTVTAFVAMFASLFI). Residues 76-85 (TQTIQATDRR) are Cytoplasmic-facing. Residues 86–106 (NVVILFAVLLTLSCLLVSFAN) traverse the membrane as a helical segment. S107 is a topological domain (periplasmic). Residues 108–128 (FSLLLIGRACLGLALGGFWAM) traverse the membrane as a helical segment. At 129-147 (SASLTMRLVPPRTVPKALS) the chain is on the cytoplasmic side. A helical membrane pass occupies residues 148 to 168 (VIFGAVSIALVIAAPLGSFLG). Residues 169–175 (ELIGWRN) lie on the Periplasmic side of the membrane. Residues 176-196 (VFNAAAVMGVLCIFWIIKSLP) traverse the membrane as a helical segment. At 197-215 (SLPGEPSHQKQNTFRLLQR) the chain is on the cytoplasmic side. A helical transmembrane segment spans residues 216–236 (PGVMAGMIAIFMSFAGQFAFF). Residues 237-255 (TYIRPVYMNLAGFSVDGLT) lie on the Periplasmic side of the membrane. Residues 256–276 (LVLLSFGIASFIGTSLSSFIL) traverse the membrane as a helical segment. Over 277 to 281 (KRSVK) the chain is Cytoplasmic. Residues 282–302 (LALAGAPLILAVSALVLTLWG) form a helical membrane-spanning segment. The Periplasmic portion of the chain corresponds to 303 to 305 (SDK). A helical membrane pass occupies residues 306–326 (IVATGVAIIWGLTFALVPVGW). Topologically, residues 327-343 (STWITRSLADQAEKAGS) are cytoplasmic. The helical transmembrane segment at 344 to 364 (IQVAVIQLANTCGAAIGGYAL) threads the bilayer. The Periplasmic portion of the chain corresponds to 365–366 (DN). The helical transmembrane segment at 367–387 (IGLTSPLMFSGTLMLLTALLV) threads the bilayer. At 388 to 396 (TAKVKMKKS) the chain is on the cytoplasmic side.

The protein belongs to the major facilitator superfamily. DHA1 family. NepI (TC 2.A.1.2.26) subfamily.

Its subcellular location is the cell inner membrane. The enzyme catalyses inosine(in) + H(+)(out) = inosine(out) + H(+)(in). It carries out the reaction guanosine(in) + H(+)(out) = guanosine(out) + H(+)(in). Its function is as follows. Involved in the efflux of purine ribonucleosides, such as inosine and guanosine. This Shigella sonnei (strain Ss046) protein is Purine ribonucleoside efflux pump NepI.